The sequence spans 127 residues: Insulin-like growth factor 3.L (127 aa).

The first 49 residues, 1 to 49, serve as a signal peptide directing secretion; that stretch reads MPVTAMCLQDSKKLKKAKLTRKKVTPFPFSRMVLCLSLVFTLYVEATNA. The segment at 49-80 is b; it reads ARCLRPRSKELLCGSELVDILQFICGPTGFYV. Intrachain disulfides connect C61–C99, C73–C112, and C98–C103. Positions 81 to 92 are c; that stretch reads SKGASFRNRNRP. The a stretch occupies residues 93 to 113; that stretch reads GIVEECCFCGCSVAILESYCA. Residues 114–121 are d; the sequence is APVTNFTG. Residues 122 to 127 constitute a propeptide, e peptide; the sequence is REEQKS.

Belongs to the insulin family.

Its subcellular location is the secreted. The insulin-like growth factors, isolated from plasma, are structurally and functionally related to insulin but have a much higher growth-promoting activity. Promotes anterior neural development. The chain is Insulin-like growth factor 3.L from Xenopus laevis (African clawed frog).